The following is a 308-amino-acid chain: GTPase Era (308 aa).

The Era-type G domain occupies R7–E181. Positions G15 to S22 are G1. G15 to S22 serves as a coordination point for GTP. The segment at Q41–N45 is G2. The interval D62–G65 is G3. GTP is bound by residues D62–I66 and N130–D133. The segment at N130–D133 is G4. The interval A160–A162 is G5. Residues L212–E290 form the KH type-2 domain.

This sequence belongs to the TRAFAC class TrmE-Era-EngA-EngB-Septin-like GTPase superfamily. Era GTPase family. As to quaternary structure, monomer.

It is found in the cytoplasm. Its subcellular location is the cell inner membrane. An essential GTPase that binds both GDP and GTP, with rapid nucleotide exchange. Plays a role in 16S rRNA processing and 30S ribosomal subunit biogenesis and possibly also in cell cycle regulation and energy metabolism. The protein is GTPase Era of Nitratidesulfovibrio vulgaris (strain DP4) (Desulfovibrio vulgaris).